The following is a 32-amino-acid chain: MSDIN-like toxin proprotein 1 (32 aa).

The propeptide occupies 1 to 10 (MSDINVTRLP). Residues 11-18 (GFVPILFP) constitute a cross-link (cyclopeptide (Gly-Pro)). The propeptide occupies 19 to 32 (CVGDDVNTALTRGE).

Belongs to the MSDIN fungal toxin family. Processed by the macrocyclase-peptidase enzyme POPB to yield a toxic cyclic octapeptide. POPB first removes 10 residues from the N-terminus. Conformational trapping of the remaining peptide forces the enzyme to release this intermediate rather than proceed to macrocyclization. The enzyme rebinds the remaining peptide in a different conformation and catalyzes macrocyclization of the N-terminal 8 residues.

Its function is as follows. Probable toxin that belongs to the MSDIN-like toxin family responsible for a large number of food poisoning cases and deaths. The sequence is that of MSDIN-like toxin proprotein 1 from Amanita bisporigera (Destroying angel).